The sequence spans 235 residues: Ribosomal RNA small subunit methyltransferase G (235 aa).

Residues Gly75, Phe80, 126 to 127 (AE), and Arg145 each bind S-adenosyl-L-methionine.

The protein belongs to the methyltransferase superfamily. RNA methyltransferase RsmG family.

The protein localises to the cytoplasm. In terms of biological role, specifically methylates the N7 position of a guanine in 16S rRNA. This chain is Ribosomal RNA small subunit methyltransferase G, found in Carboxydothermus hydrogenoformans (strain ATCC BAA-161 / DSM 6008 / Z-2901).